The following is a 122-amino-acid chain: Large ribosomal subunit protein uL14 (122 aa).

Belongs to the universal ribosomal protein uL14 family. In terms of assembly, part of the 50S ribosomal subunit. Forms a cluster with proteins L3 and L19. In the 70S ribosome, L14 and L19 interact and together make contacts with the 16S rRNA in bridges B5 and B8.

Functionally, binds to 23S rRNA. Forms part of two intersubunit bridges in the 70S ribosome. The protein is Large ribosomal subunit protein uL14 of Shewanella frigidimarina (strain NCIMB 400).